Consider the following 342-residue polypeptide: Zinc transporter ZIP11 (342 aa).

7 consecutive transmembrane segments (helical) span residues 12-32 (LLGT…VFVF), 44-64 (LGFA…APAV), 72-92 (GFGA…AAFV), 194-214 (IALL…AVGV), 263-285 (FWYG…FAVV), 290-307 (ILPY…YVVM), and 322-342 (LASW…VGLG).

It belongs to the ZIP transporter (TC 2.A.5) family.

The protein localises to the cell membrane. It localises to the nucleus. The protein resides in the cytoplasm. It is found in the golgi apparatus. It catalyses the reaction Zn(2+)(in) = Zn(2+)(out). The enzyme catalyses Cu(2+)(in) = Cu(2+)(out). Zinc importer that regulates cytosolic zinc concentrations either via zinc influx from the extracellular compartment or efflux from intracellular organelles such as Golgi apparatus. May transport copper ions as well. The transport mechanism remains to be elucidated. The protein is Zinc transporter ZIP11 (SLC39A11) of Homo sapiens (Human).